A 276-amino-acid chain; its full sequence is MGGYITMETLNSINIPKRKEDSHKGDYGKILLIGGSANLGGAIMLAARACVFSGSGLITVATHPTNHSALHSRCPEAMVIDINDTKMLTKMIEMTDSILIGPGLGVDFKGNNAITFLLQNIQPHQNLIVDGDAITIFSKLKPQLPTCRVIFTPHLKEWERLSGIPIEEQTYERNREAVDRLGATVVLKKHGTEIFFKDEDFKLTIGSPAMATGGMGDTLAGMITSFVGQFDNLKEAVMSATYTHSFIGENLAKDMYVVPPSRLINEIPYAMKQLES.

Residues 7–274 enclose the YjeF C-terminal domain; the sequence is METLNSINIP…NEIPYAMKQL (268 aa). Residues Ala42, Gly105, and His154 each coordinate (6S)-NADPHX. Residue Gly216 coordinates AMP. Asp217 lines the (6S)-NADPHX pocket.

This sequence belongs to the NnrD/CARKD family. In terms of assembly, homotetramer. Mg(2+) serves as cofactor.

It catalyses the reaction (6S)-NADHX + ADP = AMP + phosphate + NADH + H(+). It carries out the reaction (6S)-NADPHX + ADP = AMP + phosphate + NADPH + H(+). Catalyzes the dehydration of the S-form of NAD(P)HX at the expense of ADP, which is converted to AMP. Together with NAD(P)HX epimerase, which catalyzes the epimerization of the S- and R-forms, the enzyme allows the repair of both epimers of NAD(P)HX, a damaged form of NAD(P)H that is a result of enzymatic or heat-dependent hydration. This is ADP-dependent (S)-NAD(P)H-hydrate dehydratase from Staphylococcus aureus (strain NCTC 8325 / PS 47).